The primary structure comprises 311 residues: Tricarboxylate transport protein, mitochondrial (311 aa).

Positions Met-1 to Ala-13 are cleaved as a propeptide — removed in mature form. Positions Met-1–Pro-15 are enriched in low complexity. The tract at residues Met-1–Leu-22 is disordered. 3 Solcar repeats span residues Thr-23 to His-111, Thr-122 to Trp-208, and Met-218 to Leu-303. Helical transmembrane passes span Ile-29–Thr-46, Gly-86–Phe-105, and Leu-129–Met-143. The residue at position 156 (Ser-156) is a Phosphoserine. The next 3 helical transmembrane spans lie at Gly-183–Met-202, Gly-224–Leu-241, and Gly-278–Tyr-297.

It belongs to the mitochondrial carrier (TC 2.A.29) family. Possesses a short cleavable presequence, which, however, is found to be dispensable both for targeting to mitochondria and insertion into the inner membrane. However, the presequence is required to keep SLC25A1 in a soluble state and thus in an import-competent state. Mature SLC25A1 lacking the presequence is prone to aggregation.

Its subcellular location is the mitochondrion inner membrane. It localises to the mitochondrion membrane. It carries out the reaction (S)-malate(in) + citrate(out) = (S)-malate(out) + citrate(in). The enzyme catalyses D-threo-isocitrate(in) + citrate(out) = D-threo-isocitrate(out) + citrate(in). It catalyses the reaction citrate(out) + succinate(in) = citrate(in) + succinate(out). The catalysed reaction is phosphoenolpyruvate(in) + citrate(out) = phosphoenolpyruvate(out) + citrate(in). It carries out the reaction cis-aconitate(in) + citrate(out) = cis-aconitate(out) + citrate(in). The enzyme catalyses trans-aconitate(in) + citrate(out) = trans-aconitate(out) + citrate(in). It catalyses the reaction maleate(in) + citrate(out) = maleate(out) + citrate(in). Functionally, mitochondrial electroneutral antiporter that exports citrate from the mitochondria into the cytosol in exchange for malate. Also able to mediate the exchange of citrate for isocitrate, phosphoenolpyruvate, cis-aconitate and to a lesser extent trans-aconitate, maleate and succinate. In the cytoplasm, citrate plays important roles in fatty acid and sterol synthesis, regulation of glycolysis, protein acetylation, and other physiopathological processes. The protein is Tricarboxylate transport protein, mitochondrial (SLC25A1) of Bos taurus (Bovine).